The following is a 625-amino-acid chain: Tyrosine-protein kinase ITK/TSK (625 aa).

The 114-residue stretch at 4–117 folds into the PH domain; the sequence is FILLEEQLIK…WVLTLKEETR (114 aa). The Btk-type zinc-finger motif lies at 119–155; sequence NNSLVSKYHPNFWMDGRWRCCSQLEKPAVGCAPYDPS. Zn(2+) contacts are provided by histidine 127, cysteine 138, cysteine 139, and cysteine 149. The tract at residues 153–174 is disordered; sequence DPSKNASKKPLPPTPEDNRRSF. The 61-residue stretch at 177-237 folds into the SH3 domain; the sequence is PEETLVIALY…PSSYLVEKSP (61 aa). Tyrosine 186 carries the post-translational modification Phosphotyrosine; by autocatalysis. Residues 245-343 form the SH2 domain; it reads WYNKSISRDK…GLVTRLRYPV (99 aa). The region spanning 368-620 is the Protein kinase domain; sequence LTFVQEIGSG…SQLLSQLAEI (253 aa). ATP is bound by residues 374 to 382 and lysine 396; that span reads IGSGQFGLV. The active-site Proton acceptor is aspartate 487. Phosphotyrosine; by LCK is present on tyrosine 517. The residue at position 570 (serine 570) is a Phosphoserine.

The protein belongs to the protein kinase superfamily. Tyr protein kinase family. TEC subfamily. Homooligomerizes; this association negatively regulates kinase activity. Interacts with PPIA/CYPA; this interaction regulates TCR signal strength via a proline-directed conformational switch in ITK. Interacts with THEMIS. Interacts with FASLG. Interacts with VAV1; this interaction is important for VAV1 localization and TCR-induced actin polarization. Interacts with TBX21. The cofactor is Zn(2+). In terms of processing, phosphorylated at Tyr-517 in the activation loop of the kinase domain by LCK. Subsequent autophosphorylation at Tyr-186 leads to the kinase activation. The autophosphorylated Tyr-186 lies within the substrate binding sequence of the SH3 domain. Ubiquitinated. As to expression, is detected in the thymus, lymph node and very faintly in the spleen, but is not detected in the liver, lung, kidney, heart, brain, intestine or testis. Expressed in T-lymphocytes and mast cells. It may also be expressed in natural killer cells.

It is found in the cytoplasm. The protein localises to the nucleus. The enzyme catalyses L-tyrosyl-[protein] + ATP = O-phospho-L-tyrosyl-[protein] + ADP + H(+). Functionally, tyrosine kinase that plays an essential role in regulation of the adaptive immune response. Regulates the development, function and differentiation of conventional T-cells and nonconventional NKT-cells. When antigen presenting cells (APC) activate T-cell receptor (TCR), a series of phosphorylation lead to the recruitment of ITK to the cell membrane, in the vicinity of the stimulated TCR receptor, where it is phosphorylated by LCK. Phosphorylation leads to ITK autophosphorylation and full activation. Once activated, phosphorylates PLCG1, leading to the activation of this lipase and subsequent cleavage of its substrates. In turn, the endoplasmic reticulum releases calcium in the cytoplasm and the nuclear activator of activated T-cells (NFAT) translocates into the nucleus to perform its transcriptional duty. Phosphorylates 2 essential adapter proteins: the linker for activation of T-cells/LAT protein and LCP2. Then, a large number of signaling molecules such as VAV1 are recruited and ultimately lead to lymphokine production, T-cell proliferation and differentiation. Required for TCR-mediated calcium response in gamma-delta T-cells, may also be involved in the modulation of the transcriptomic signature in the Vgamma2-positive subset of immature gamma-delta T-cells. Phosphorylates TBX21 at 'Tyr-525' and mediates its interaction with GATA3. The chain is Tyrosine-protein kinase ITK/TSK (Itk) from Mus musculus (Mouse).